Reading from the N-terminus, the 377-residue chain is Succinyl-diaminopimelate desuccinylase (377 aa).

H67 contacts Zn(2+). D69 is an active-site residue. D100 contributes to the Zn(2+) binding site. E134 (proton acceptor) is an active-site residue. The Zn(2+) site is built by E135, E163, and H349.

The protein belongs to the peptidase M20A family. DapE subfamily. Homodimer. Zn(2+) is required as a cofactor. Requires Co(2+) as cofactor.

It catalyses the reaction N-succinyl-(2S,6S)-2,6-diaminopimelate + H2O = (2S,6S)-2,6-diaminopimelate + succinate. The protein operates within amino-acid biosynthesis; L-lysine biosynthesis via DAP pathway; LL-2,6-diaminopimelate from (S)-tetrahydrodipicolinate (succinylase route): step 3/3. Its function is as follows. Catalyzes the hydrolysis of N-succinyl-L,L-diaminopimelic acid (SDAP), forming succinate and LL-2,6-diaminopimelate (DAP), an intermediate involved in the bacterial biosynthesis of lysine and meso-diaminopimelic acid, an essential component of bacterial cell walls. This chain is Succinyl-diaminopimelate desuccinylase, found in Dechloromonas aromatica (strain RCB).